Reading from the N-terminus, the 438-residue chain is Trigger factor (438 aa).

The 86-residue stretch at 163 to 248 (GEIAVLDFAA…VHAVKERKLP (86 aa)) folds into the PPIase FKBP-type domain.

This sequence belongs to the FKBP-type PPIase family. Tig subfamily.

The protein localises to the cytoplasm. The enzyme catalyses [protein]-peptidylproline (omega=180) = [protein]-peptidylproline (omega=0). Involved in protein export. Acts as a chaperone by maintaining the newly synthesized protein in an open conformation. Functions as a peptidyl-prolyl cis-trans isomerase. The chain is Trigger factor from Oleidesulfovibrio alaskensis (strain ATCC BAA-1058 / DSM 17464 / G20) (Desulfovibrio alaskensis).